We begin with the raw amino-acid sequence, 310 residues long: Acetyl-coenzyme A carboxylase carboxyl transferase subunit beta, chloroplastic (310 aa).

Residues 47-310 (LWARCDNCGN…LYLSVPYNKN (264 aa)) form the CoA carboxyltransferase N-terminal domain. Zn(2+) is bound by residues cysteine 51, cysteine 54, cysteine 70, and cysteine 73. Residues 51-73 (CDNCGNMLYVKFLKQNRSVCEEC) form a C4-type zinc finger.

This sequence belongs to the AccD/PCCB family. As to quaternary structure, acetyl-CoA carboxylase is a heterohexamer composed of biotin carboxyl carrier protein, biotin carboxylase and 2 subunits each of ACCase subunit alpha and ACCase plastid-coded subunit beta (accD). Zn(2+) serves as cofactor.

Its subcellular location is the plastid. It is found in the chloroplast stroma. It carries out the reaction N(6)-carboxybiotinyl-L-lysyl-[protein] + acetyl-CoA = N(6)-biotinyl-L-lysyl-[protein] + malonyl-CoA. The protein operates within lipid metabolism; malonyl-CoA biosynthesis; malonyl-CoA from acetyl-CoA: step 1/1. Its function is as follows. Component of the acetyl coenzyme A carboxylase (ACC) complex. Biotin carboxylase (BC) catalyzes the carboxylation of biotin on its carrier protein (BCCP) and then the CO(2) group is transferred by the transcarboxylase to acetyl-CoA to form malonyl-CoA. The sequence is that of Acetyl-coenzyme A carboxylase carboxyl transferase subunit beta, chloroplastic from Adiantum capillus-veneris (Maidenhair fern).